We begin with the raw amino-acid sequence, 333 residues long: Adenosine deaminase (333 aa).

The Zn(2+) site is built by His12 and His14. Residues His14, Asp16, and Gly170 each coordinate substrate. His197 lines the Zn(2+) pocket. Glu200 (proton donor) is an active-site residue. Asp278 is a Zn(2+) binding site. Substrate is bound at residue Asp279.

It belongs to the metallo-dependent hydrolases superfamily. Adenosine and AMP deaminases family. Adenosine deaminase subfamily. Zn(2+) is required as a cofactor.

It carries out the reaction adenosine + H2O + H(+) = inosine + NH4(+). The catalysed reaction is 2'-deoxyadenosine + H2O + H(+) = 2'-deoxyinosine + NH4(+). In terms of biological role, catalyzes the hydrolytic deamination of adenosine and 2-deoxyadenosine. The chain is Adenosine deaminase from Shigella boydii serotype 4 (strain Sb227).